The following is an 841-amino-acid chain: Chitin synthase 1 (841 aa).

Residues methionine 1 to proline 13 show a composition bias toward basic and acidic residues. A disordered region spans residues methionine 1–arginine 98. Positions proline 76–proline 85 are enriched in pro residues. Transmembrane regions (helical) follow at residues tryptophan 302 to glycine 322, serine 385 to leucine 405, leucine 526 to alanine 546, isoleucine 564 to alanine 584, phenylalanine 602 to valine 622, asparagine 644 to phenylalanine 664, phenylalanine 673 to cysteine 693, valine 778 to leucine 798, and leucine 816 to phenylalanine 836.

Belongs to the chitin synthase family.

The protein localises to the cell membrane. It carries out the reaction [(1-&gt;4)-N-acetyl-beta-D-glucosaminyl](n) + UDP-N-acetyl-alpha-D-glucosamine = [(1-&gt;4)-N-acetyl-beta-D-glucosaminyl](n+1) + UDP + H(+). Functionally, polymerizes chitin, a structural polymer of the cell wall and septum, by transferring the sugar moiety of UDP-GlcNAc to the non-reducing end of the growing chitin polymer. The sequence is that of Chitin synthase 1 (chs1) from Phycomyces blakesleeanus (strain ATCC 8743b / DSM 1359 / FGSC 10004 / NBRC 33097 / NRRL 1555).